A 635-amino-acid chain; its full sequence is MIVITLPDGSQREFPGPVTVAEVAASIGTGLAKAALGGRVDGKLVDTGHRIEGDARLAIVTDKDADGLDLIRHSTAHLLAYAVKELFPEAQVTIGPVIENGFYYDFSYKRPFTPEDLAAIEAKMTELAKKDEKVERRVLPRDEAVAYFKSIGEDYKAEIIAGIPAGQDVSLYREGRFEDLCRGPHVPSTGKLRHFKLMKVAGAYWRGDHRNEMLQRIYGTAWASKDELQQYLHMLEEAEKRDHRKLGRELDLFHLDEHAPGLVFWHPKGWTVWQQVEQYMRAVYRDNGYLEVKGPQILDQGLWEKTGHWDKYRENMFVTESEKRDYALKPMNCPGHILIYKQGIKSYRDLPLRYGEFGQCHRNEPTGGLHGIMRVRGFTQDDGHIFCTEEHILPECVAYTALLQKVYKDFGFNDIIYKVATRPEKRIGSDAVWDKAEHALMESLRASGCEFVVSPGDGAFYGPKIEYTLKDALGRQWQCGTMQVDFSLPERLDAVYVAESGERLFPVMLHRAIVGSLERFIGILIEQHAGALPAWLAPVQVMVLNITDGQADYAAEIAKTLQKQGVRAGVDLRNEKITYKIREHSMQKLPYILVVGDKEKAAGAVAVRARGNQDLGVMPLDAFSQRMASDIAHKV.

The 61-residue stretch at 1 to 61 folds into the TGS domain; the sequence is MIVITLPDGS…EGDARLAIVT (61 aa). The segment at 242–533 is catalytic; sequence DHRKLGRELD…LIEQHAGALP (292 aa). Residues Cys-333, His-384, and His-510 each coordinate Zn(2+).

Belongs to the class-II aminoacyl-tRNA synthetase family. In terms of assembly, homodimer. It depends on Zn(2+) as a cofactor.

It localises to the cytoplasm. The enzyme catalyses tRNA(Thr) + L-threonine + ATP = L-threonyl-tRNA(Thr) + AMP + diphosphate + H(+). Its function is as follows. Catalyzes the attachment of threonine to tRNA(Thr) in a two-step reaction: L-threonine is first activated by ATP to form Thr-AMP and then transferred to the acceptor end of tRNA(Thr). Also edits incorrectly charged L-seryl-tRNA(Thr). This Methylibium petroleiphilum (strain ATCC BAA-1232 / LMG 22953 / PM1) protein is Threonine--tRNA ligase.